We begin with the raw amino-acid sequence, 52 residues long: uncharacterized protein (52 aa).

This is an uncharacterized protein from Escherichia coli.